Reading from the N-terminus, the 758-residue chain is MDNTTNINTNERSSNTDFSSAPNIKGLNSHTQLQFDADSRVFVSDVMAKNSKQLLYAHIYNYLIKNNYWNSAAKFLSEADLPLSRINGSASGGKTSLNASLKQGLMDIASKGDIVSEDGLLPSKMLMDANDTFLLEWWEIFQSLFNGDLESGYQQDHNPLRERIIPILPANSKSNMPSHFSNLPPNVIPPTQNSFPVSEESFRPNGDGSNFNLNDPTNRNVSERFLSRTSGVYDKQNSANFAPDTAINSDIAGQQYATINLHKHFNDLQSPAQPQQSSQQQIQQPQHQPQHQPQQQQQQQQQQQQQQQQQQQQQQQQQQQQQQHQQQQQTPYPIVNPQMVPHIPSENSHSTGLMPSVPPTNQQFNAQTQSSMFSDQQRFFQYQLHHQNQGQAPSFQQSQSGRFDDMNAMKMFFQQQALQQNSLQQNLGNQNYQSNTRNNTAEETTPTNDNNANGNSLLQEHIRARFNKMKTIPQQMKNQSTVANPVVSDITSQQQYMHMMMQRMAANQQLQNSAFPPDTNRIAPANNTMPLQPGNMGSPVIENPGMRQTNPSGQNPMINMQPLYQNVSSAMHAFAPQQQFHLPQHYKTNTSVPQNDSTSVFPLPNNNNNNNNNNNNNNNNNSNNSNNNNNNNNNNNNSNNTPTVSQPSSKCTSSSSTTPNITTTIQPKRKQRVGKTKTKESRKVAAAQKVMKSKKLEQNGDSAATNFINVTPKDSGGKGTVKVQNSNSQQQLNGSFSMDTETFDIFNIGDFSPDLMDS.

Positions 1–23 are disordered; it reads MDNTTNINTNERSSNTDFSSAPN. The region spanning 51–83 is the LisH domain; sequence SKQLLYAHIYNYLIKNNYWNSAAKFLSEADLPL. Disordered regions lie at residues 191 to 220, 268 to 299, 322 to 355, 428 to 454, and 587 to 681; these read TQNS…TNRN, LQSP…QQQQ, QQHQ…GLMP, GNQN…NANG, and KTNT…TKES. Over residues 207 to 220 the composition is skewed to polar residues; it reads DGSNFNLNDPTNRN. A compositionally biased stretch (low complexity) spans 269 to 299; it reads QSPAQPQQSSQQQIQQPQHQPQHQPQQQQQQ. 3 stretches are compositionally biased toward polar residues: residues 345–355, 436–454, and 587–600; these read SENSHSTGLMP, TRNN…NANG, and KTNT…STSV. Positions 605 to 664 are enriched in low complexity; the sequence is NNNNNNNNNNNNNNNNNSNNSNNNNNNNNNNNNSNNTPTVSQPSSKCTSSSSTTPNITTT. Basic residues predominate over residues 667 to 676; that stretch reads PKRKQRVGKT.

Belongs to the MSS11 family. Interacts with FLO8, STE12 and TEC1.

Its subcellular location is the cytoplasm. The protein resides in the nucleus. Its function is as follows. Transcription factor that regulates pseudohyphal differentiation, invasive growth, floculation, adhesion and starch metabolism in response to nutrient availability. This Saccharomyces cerevisiae (strain ATCC 204508 / S288c) (Baker's yeast) protein is Transcription activator MSS11 (MSS11).